The sequence spans 957 residues: Glycine dehydrogenase (decarboxylating) (957 aa).

Lys-708 carries the N6-(pyridoxal phosphate)lysine modification.

It belongs to the GcvP family. In terms of assembly, the glycine cleavage system is composed of four proteins: P, T, L and H. Pyridoxal 5'-phosphate serves as cofactor.

The enzyme catalyses N(6)-[(R)-lipoyl]-L-lysyl-[glycine-cleavage complex H protein] + glycine + H(+) = N(6)-[(R)-S(8)-aminomethyldihydrolipoyl]-L-lysyl-[glycine-cleavage complex H protein] + CO2. In terms of biological role, the glycine cleavage system catalyzes the degradation of glycine. The P protein binds the alpha-amino group of glycine through its pyridoxal phosphate cofactor; CO(2) is released and the remaining methylamine moiety is then transferred to the lipoamide cofactor of the H protein. The chain is Glycine dehydrogenase (decarboxylating) from Salmonella newport (strain SL254).